Reading from the N-terminus, the 543-residue chain is Peptide chain release factor 3 (543 aa).

Positions 21–289 (KKRRTFAIIS…ALSDWAPSPL (269 aa)) constitute a tr-type G domain. GTP-binding positions include 30–37 (SHPDAGKT), 98–102 (DTPGH), and 152–155 (NKLD).

This sequence belongs to the TRAFAC class translation factor GTPase superfamily. Classic translation factor GTPase family. PrfC subfamily.

The protein localises to the cytoplasm. Increases the formation of ribosomal termination complexes and stimulates activities of RF-1 and RF-2. It binds guanine nucleotides and has strong preference for UGA stop codons. It may interact directly with the ribosome. The stimulation of RF-1 and RF-2 is significantly reduced by GTP and GDP, but not by GMP. The protein is Peptide chain release factor 3 of Thiobacillus denitrificans (strain ATCC 25259 / T1).